The chain runs to 229 residues: Large ribosomal subunit protein uL1 (229 aa).

The protein belongs to the universal ribosomal protein uL1 family. In terms of assembly, part of the 50S ribosomal subunit.

Its function is as follows. Binds directly to 23S rRNA. The L1 stalk is quite mobile in the ribosome, and is involved in E site tRNA release. In terms of biological role, protein L1 is also a translational repressor protein, it controls the translation of the L11 operon by binding to its mRNA. In Streptococcus equi subsp. equi (strain 4047), this protein is Large ribosomal subunit protein uL1.